The following is a 233-amino-acid chain: Putative N-acetylmuramoyl-L-alanine amidase (233 aa).

A MurNAc-LAA domain is found at 1-219 (MIDPGHGGQD…IANAIYIALK (219 aa)).

It belongs to the N-acetylmuramoyl-L-alanine amidase 3 family.

Its subcellular location is the secreted. It carries out the reaction Hydrolyzes the link between N-acetylmuramoyl residues and L-amino acid residues in certain cell-wall glycopeptides.. Functionally, cell-wall hydrolase involved in septum cleavage during cell division. The protein is Putative N-acetylmuramoyl-L-alanine amidase (amiB) of Buchnera aphidicola subsp. Schizaphis graminum (strain Sg).